A 570-amino-acid polypeptide reads, in one-letter code: Urease subunit alpha (570 aa).

The 436-residue stretch at 135–570 (GGLDIHVHFN…ELPLAQRYHL (436 aa)) folds into the Urease domain. The Ni(2+) site is built by histidine 140, histidine 142, and lysine 219. Residue lysine 219 is modified to N6-carboxylysine. Histidine 221 provides a ligand contact to substrate. Residues histidine 248 and histidine 274 each contribute to the Ni(2+) site. The active-site Proton donor is the histidine 322. Aspartate 362 is a binding site for Ni(2+).

The protein belongs to the metallo-dependent hydrolases superfamily. Urease alpha subunit family. In terms of assembly, heterotrimer of UreA (gamma), UreB (beta) and UreC (alpha) subunits. Three heterotrimers associate to form the active enzyme. Ni cation serves as cofactor. In terms of processing, carboxylation allows a single lysine to coordinate two nickel ions.

The protein localises to the cytoplasm. It catalyses the reaction urea + 2 H2O + H(+) = hydrogencarbonate + 2 NH4(+). The protein operates within nitrogen metabolism; urea degradation; CO(2) and NH(3) from urea (urease route): step 1/1. The protein is Urease subunit alpha of Natronomonas pharaonis (strain ATCC 35678 / DSM 2160 / CIP 103997 / JCM 8858 / NBRC 14720 / NCIMB 2260 / Gabara) (Halobacterium pharaonis).